The following is a 116-amino-acid chain: ATP-dependent Clp protease adapter protein ClpS (116 aa).

A compositionally biased stretch (polar residues) spans 1-11 (MRRINTIMQGK). A disordered region spans residues 1-23 (MRRINTIMQGKTNGGNGPESGTV).

It belongs to the ClpS family. In terms of assembly, binds to the N-terminal domain of the chaperone ClpA.

Functionally, involved in the modulation of the specificity of the ClpAP-mediated ATP-dependent protein degradation. The polypeptide is ATP-dependent Clp protease adapter protein ClpS (Brucella abortus (strain S19)).